A 173-amino-acid chain; its full sequence is Ribosome maturation factor RimM (173 aa).

Positions 96 to 169 constitute a PRC barrel domain; it reads PDEFYDHQLE…LITIDPPDGL (74 aa).

This sequence belongs to the RimM family. Binds ribosomal protein uS19.

Its subcellular location is the cytoplasm. An accessory protein needed during the final step in the assembly of 30S ribosomal subunit, possibly for assembly of the head region. Essential for efficient processing of 16S rRNA. May be needed both before and after RbfA during the maturation of 16S rRNA. It has affinity for free ribosomal 30S subunits but not for 70S ribosomes. The protein is Ribosome maturation factor RimM of Mycolicibacterium gilvum (strain PYR-GCK) (Mycobacterium gilvum (strain PYR-GCK)).